Here is an 811-residue protein sequence, read N- to C-terminus: DEP domain-containing protein 1A (811 aa).

Residues 24 to 108 (FRAGMPLRKH…DNNQLFRFPA (85 aa)) enclose the DEP domain. A Rho-GAP domain is found at 281–321 (DYFLDLPEPLLTFEYYELFVNILVVCGYITVSDRSSGIHKI). At Ser512 the chain carries Phosphoserine. The interval 598–653 (AIDALQLCCLLLPPPNRRKLQLLMRMISRMSQNVDMPKLHDAMGTRSLMIHTFSRC) is interaction with ZNF224.

As to quaternary structure, isoform 2 and isoform 5 can form homodimers and heterodimers. Interacts with ZNF224. In terms of tissue distribution, expressed in testis. Up-regulated in bladder cancer cells (at protein level).

It localises to the nucleus. May be involved in transcriptional regulation as a transcriptional corepressor. The DEPDC1A-ZNF224 complex may play a critical role in bladder carcinogenesis by repressing the transcription of the A20 gene, leading to transport of NF-KB protein into the nucleus, resulting in suppression of apoptosis of bladder cancer cells. This is DEP domain-containing protein 1A (DEPDC1) from Homo sapiens (Human).